The primary structure comprises 250 residues: NAD-dependent protein deacetylase 2 (250 aa).

One can recognise a Deacetylase sirtuin-type domain in the interval 4 to 250 (MDSKNLFKKA…LRNIWNLIKS (247 aa)). Residues A29, T33, F40, R41, Q107, I109, D110, and H125 each contribute to the NAD(+) site. Nicotinamide is bound at residue F40. 2 residues coordinate nicotinamide: I109 and D110. The active-site Proton acceptor is H125. Residues C133, C136, C158, and C161 each contribute to the Zn(2+) site. NAD(+) contacts are provided by S198, S199, and N219.

The protein belongs to the sirtuin family. Class U subfamily. Zn(2+) is required as a cofactor.

The protein resides in the cytoplasm. The enzyme catalyses N(6)-acetyl-L-lysyl-[protein] + NAD(+) + H2O = 2''-O-acetyl-ADP-D-ribose + nicotinamide + L-lysyl-[protein]. Its function is as follows. NAD-dependent protein deacetylase which modulates the activities of several enzymes which are inactive in their acetylated form. In Caldanaerobacter subterraneus subsp. tengcongensis (strain DSM 15242 / JCM 11007 / NBRC 100824 / MB4) (Thermoanaerobacter tengcongensis), this protein is NAD-dependent protein deacetylase 2.